The sequence spans 156 residues: Histone H2B.2 (156 aa).

Basic and acidic residues-rich tracts occupy residues 1–10 and 24–58; these read MAPKKDEKPA and AKAE…GEKK. The tract at residues 1–63 is disordered; the sequence is MAPKKDEKPA…DGEKKDKKKK (63 aa). 2 positions are modified to N6-acetyllysine: K40 and K41. A Glycyl lysine isopeptide (Lys-Gly) (interchain with G-Cter in ubiquitin) cross-link involves residue K152.

This sequence belongs to the histone H2B family. In terms of assembly, the nucleosome is a histone octamer containing two molecules each of H2A, H2B, H3 and H4 assembled in one H3-H4 heterotetramer and two H2A-H2B heterodimers. The octamer wraps approximately 147 bp of DNA. The N-terminus is blocked. Post-translationally, can be acetylated to form H2BK33ac and H2BK34ac. Acetylated mainly on the ubiquitinated form. In terms of processing, monoubiquitinated to form H2BK143ub1; which is increased during the light period and may give a specific tag for epigenetic transcriptional activation.

It localises to the nucleus. The protein localises to the chromosome. Core component of nucleosome. Nucleosomes wrap and compact DNA into chromatin, limiting DNA accessibility to the cellular machineries which require DNA as a template. Histones thereby play a central role in transcription regulation, DNA repair, DNA replication and chromosomal stability. DNA accessibility is regulated via a complex set of post-translational modifications of histones, also called histone code, and nucleosome remodeling. The chain is Histone H2B.2 from Chlamydomonas reinhardtii (Chlamydomonas smithii).